The sequence spans 175 residues: Probable DNA replication complex GINS protein PSF2 (175 aa).

It belongs to the GINS2/PSF2 family. In terms of assembly, component of the GINS complex which is a heterotetramer of SLD5, PSF1, PSF2 and PSF3.

The protein resides in the nucleus. In terms of biological role, the GINS complex plays an essential role in the initiation of DNA replication. The chain is Probable DNA replication complex GINS protein PSF2 from Encephalitozoon cuniculi (strain GB-M1) (Microsporidian parasite).